The primary structure comprises 396 residues: Phosphoglycerate kinase (396 aa).

Substrate-binding positions include 22–24, arginine 37, 60–63, arginine 118, and arginine 151; these read DLN and HFGR. Residues lysine 201, glutamate 323, and 353 to 356 contribute to the ATP site; that span reads GGDT.

It belongs to the phosphoglycerate kinase family. Monomer.

It localises to the cytoplasm. It catalyses the reaction (2R)-3-phosphoglycerate + ATP = (2R)-3-phospho-glyceroyl phosphate + ADP. It participates in carbohydrate degradation; glycolysis; pyruvate from D-glyceraldehyde 3-phosphate: step 2/5. This is Phosphoglycerate kinase from Azorhizobium caulinodans (strain ATCC 43989 / DSM 5975 / JCM 20966 / LMG 6465 / NBRC 14845 / NCIMB 13405 / ORS 571).